The following is a 288-amino-acid chain: 4-hydroxy-3-methylbut-2-enyl diphosphate reductase (288 aa).

Cys-12 lines the [4Fe-4S] cluster pocket. Positions 42 and 77 each coordinate (2E)-4-hydroxy-3-methylbut-2-enyl diphosphate. Dimethylallyl diphosphate-binding residues include His-42 and His-77. Residues His-42 and His-77 each coordinate isopentenyl diphosphate. Position 99 (Cys-99) interacts with [4Fe-4S] cluster. His-127 contributes to the (2E)-4-hydroxy-3-methylbut-2-enyl diphosphate binding site. Position 127 (His-127) interacts with dimethylallyl diphosphate. His-127 serves as a coordination point for isopentenyl diphosphate. Catalysis depends on Glu-129, which acts as the Proton donor. Thr-165 serves as a coordination point for (2E)-4-hydroxy-3-methylbut-2-enyl diphosphate. A [4Fe-4S] cluster-binding site is contributed by Cys-193. (2E)-4-hydroxy-3-methylbut-2-enyl diphosphate is bound by residues Ser-221, Ser-222, Asn-223, and Ser-265. 4 residues coordinate dimethylallyl diphosphate: Ser-221, Ser-222, Asn-223, and Ser-265. Residues Ser-221, Ser-222, Asn-223, and Ser-265 each contribute to the isopentenyl diphosphate site.

Belongs to the IspH family. It depends on [4Fe-4S] cluster as a cofactor.

It catalyses the reaction isopentenyl diphosphate + 2 oxidized [2Fe-2S]-[ferredoxin] + H2O = (2E)-4-hydroxy-3-methylbut-2-enyl diphosphate + 2 reduced [2Fe-2S]-[ferredoxin] + 2 H(+). The enzyme catalyses dimethylallyl diphosphate + 2 oxidized [2Fe-2S]-[ferredoxin] + H2O = (2E)-4-hydroxy-3-methylbut-2-enyl diphosphate + 2 reduced [2Fe-2S]-[ferredoxin] + 2 H(+). It participates in isoprenoid biosynthesis; dimethylallyl diphosphate biosynthesis; dimethylallyl diphosphate from (2E)-4-hydroxy-3-methylbutenyl diphosphate: step 1/1. The protein operates within isoprenoid biosynthesis; isopentenyl diphosphate biosynthesis via DXP pathway; isopentenyl diphosphate from 1-deoxy-D-xylulose 5-phosphate: step 6/6. Catalyzes the conversion of 1-hydroxy-2-methyl-2-(E)-butenyl 4-diphosphate (HMBPP) into a mixture of isopentenyl diphosphate (IPP) and dimethylallyl diphosphate (DMAPP). Acts in the terminal step of the DOXP/MEP pathway for isoprenoid precursor biosynthesis. The protein is 4-hydroxy-3-methylbut-2-enyl diphosphate reductase of Thermoanaerobacter pseudethanolicus (strain ATCC 33223 / 39E) (Clostridium thermohydrosulfuricum).